The primary structure comprises 490 residues: Dual specificity protein kinase CLK3 (490 aa).

A disordered region spans residues 1–138 (MHHCKRYRSP…SKRSSRSVED (138 aa)). Residue tyrosine 7 is modified to Phosphotyrosine. 6 positions are modified to phosphoserine: serine 9, serine 49, serine 51, serine 67, serine 76, and serine 78. Basic and acidic residues-rich tracts occupy residues 26–56 (YSRE…DRIP) and 63–76 (EHRD…EERS). A compositionally biased stretch (basic residues) spans 88-116 (RSRHRRRSRERGPYRTRKHAHHCHKRRTR). The segment covering 117–130 (SCSSASSRSQQSSK) has biased composition (low complexity). Position 135 is a phosphoserine (serine 135). The Protein kinase domain occupies 156–472 (YEIVGNLGEG…LAEALLHPFF (317 aa)). Residues 162–170 (LGEGTFGKV) and lysine 186 contribute to the ATP site. Aspartate 283 serves as the catalytic Proton acceptor.

This sequence belongs to the protein kinase superfamily. CMGC Ser/Thr protein kinase family. Lammer subfamily. Post-translationally, autophosphorylates on all three types of residues.

It localises to the nucleus. The protein resides in the cytoplasm. Its subcellular location is the cytoplasmic vesicle. It is found in the secretory vesicle. The protein localises to the acrosome. It catalyses the reaction L-seryl-[protein] + ATP = O-phospho-L-seryl-[protein] + ADP + H(+). It carries out the reaction L-threonyl-[protein] + ATP = O-phospho-L-threonyl-[protein] + ADP + H(+). The catalysed reaction is L-tyrosyl-[protein] + ATP = O-phospho-L-tyrosyl-[protein] + ADP + H(+). With respect to regulation, leucettine L41 inhibits its kinase activity and affects the regulation of alternative splicing mediated by phosphorylation of SR proteins. Dual specificity kinase acting on both serine/threonine and tyrosine-containing substrates. Phosphorylates serine- and arginine-rich (SR) proteins of the spliceosomal complex. May be a constituent of a network of regulatory mechanisms that enable SR proteins to control RNA splicing and can cause redistribution of SR proteins from speckles to a diffuse nucleoplasmic distribution. Phosphorylates SRSF1 and SRSF3. Regulates the alternative splicing of tissue factor (F3) pre-mRNA in endothelial cells. This is Dual specificity protein kinase CLK3 (Clk3) from Rattus norvegicus (Rat).